A 491-amino-acid chain; its full sequence is Probable Xaa-Pro aminopeptidase An01g13040 (491 aa).

Mn(2+)-binding residues include Asp-276, Asp-287, Glu-420, and Glu-459.

Belongs to the peptidase M24B family. The cofactor is Mn(2+).

It carries out the reaction Release of any N-terminal amino acid, including proline, that is linked to proline, even from a dipeptide or tripeptide.. Its function is as follows. Catalyzes the removal of a penultimate prolyl residue from the N-termini of peptides. In Aspergillus niger (strain ATCC MYA-4892 / CBS 513.88 / FGSC A1513), this protein is Probable Xaa-Pro aminopeptidase An01g13040.